The primary structure comprises 583 residues: Transmembrane protein 108 (583 aa).

The chain crosses the membrane as a helical span at residues 7–27 (ALYCQLLSFLLTLALTEALVF). The interval 31 to 176 (EPSPRESLQV…ATIRRPPRPP (146 aa)) is interacts with SH3GL2. 2 disordered regions span residues 71 to 360 (VTPT…GVFA) and 376 to 404 (VPSEGLPQGTSLAPQAPAHPTWASESTVS). Composition is skewed to polar residues over residues 80-93 (PSSQATAPMATTTP) and 100-122 (PTNTISTIMATASTPHSEGSLST). Residues 177–187 (GSSRKGAGSSP) are compositionally biased toward low complexity. The segment at 180–413 (RKGAGSSPRP…SQAEEKAVAT (234 aa)) is interacts with DST (isoform 1). Polar residues-rich tracts occupy residues 251–273 (YSSSPQPQTVAATSAPSRTSWVP), 310–319 (ASGTPASQQR), and 333–357 (DGSSHSDSWLTVTPGTSRPPSTNSG). A helical membrane pass occupies residues 477–497 (IAWVILAISVPISSCSVLLTV). An interaction with CYFIP2 region spans residues 498 to 583 (CCLRRKKKPA…FVGNDQVSEI (86 aa)).

Interacts with DST (isoform 1). Interacts with SH3GL2. Interacts (via N-terminus) with CYFIP1 and CYFIP2; the interactions associate TMEM108 with the WAVE1 complex. Glycosylated.

It is found in the membrane. The protein localises to the postsynaptic density. Its subcellular location is the endosome membrane. It localises to the cell projection. The protein resides in the axon. It is found in the dendrite. The protein localises to the early endosome. Functionally, transmembrane protein required for proper cognitive functions. Involved in the development of dentate gyrus (DG) neuron circuitry, is necessary for AMPA receptors surface expression and proper excitatory postsynaptic currents of DG granule neurons. Regulates the organization and stability of the microtubule network of sensory neurons to allow axonal transport. Through the interaction with DST, mediates the docking of the dynein/dynactin motor complex to vesicle cargos for retrograde axonal transport. In hippocampal neurons, required for BDNF-dependent dendrite outgrowth. Cooperates with SH3GL2 and recruits the WAVE1 complex to facilitate actin-dependent BDNF:NTRK2 early endocytic trafficking and mediate signaling from early endosomes. The polypeptide is Transmembrane protein 108 (Bos taurus (Bovine)).